The chain runs to 66 residues: Beta-mammal toxin Cv3 (66 aa).

An LCN-type CS-alpha/beta domain is found at 1-66; that stretch reads KEGYIVNYYD…VWPLPNKTCN (66 aa). Intrachain disulfides connect C12–C65, C16–C41, C25–C46, and C29–C48.

Expressed by the venom gland.

The protein localises to the secreted. Its function is as follows. Beta toxins bind voltage-independently at site-4 of sodium channels (Nav) and reduces peak current and shifts the voltage of activation toward more negative potentials thereby affecting sodium channel activation and promoting spontaneous and repetitive firing. This toxin is strongly toxic to mice. The chain is Beta-mammal toxin Cv3 from Centruroides villegasi (Scorpion).